We begin with the raw amino-acid sequence, 1006 residues long: Probable beta-galactosidase A (1006 aa).

The N-terminal stretch at 1-18 (MKLLSVCAIALLAAQAAG) is a signal peptide. Substrate contacts are provided by Y96, N140, A141, and E142. The N-linked (GlcNAc...) asparagine glycan is linked to N156. N199 provides a ligand contact to substrate. E200 functions as the Proton donor in the catalytic mechanism. An intrachain disulfide couples C205 to C206. Y260 serves as a coordination point for substrate. C266 and C315 are oxidised to a cystine. The active-site Nucleophile is E298. Position 364 (Y364) interacts with substrate. N373, N402, N422, N622, N760, N777, and N914 each carry an N-linked (GlcNAc...) asparagine glycan.

It belongs to the glycosyl hydrolase 35 family.

The protein resides in the secreted. The enzyme catalyses Hydrolysis of terminal non-reducing beta-D-galactose residues in beta-D-galactosides.. Cleaves beta-linked terminal galactosyl residues from gangliosides, glycoproteins, and glycosaminoglycans. This is Probable beta-galactosidase A (lacA) from Aspergillus fumigatus (strain ATCC MYA-4609 / CBS 101355 / FGSC A1100 / Af293) (Neosartorya fumigata).